Here is a 67-residue protein sequence, read N- to C-terminus: Protein AaeX (67 aa).

2 consecutive transmembrane segments (helical) span residues Leu3 to Leu23 and Phe43 to Ser63.

This sequence belongs to the AaeX family.

It localises to the cell membrane. This is Protein AaeX from Escherichia coli (strain K12 / DH10B).